Consider the following 732-residue polypeptide: Aldehyde oxidoreductase molybdenum-binding subunit PaoC (732 aa).

Residues 241-242, 468-470, 511-512, 615-621, Gln625, and 688-691 contribute to the Mo-molybdopterin cytosine dinucleotide site; these read GF, IGT, GA, RILNPKT, and KGVG. The active-site Proton acceptor is the Glu692.

Belongs to the xanthine dehydrogenase family. Heterotrimer composed of PaoA, PaoB and PaoC. Requires Mo-molybdopterin cytosine dinucleotide as cofactor.

It localises to the periplasm. It carries out the reaction an aldehyde + A + H2O = a carboxylate + AH2 + H(+). Its function is as follows. Oxidizes aldehydes to the corresponding carboxylic acids with a preference for aromatic aldehydes. It might play a role in the detoxification of aldehydes to avoid cell damage. The sequence is that of Aldehyde oxidoreductase molybdenum-binding subunit PaoC from Escherichia coli O157:H7.